An 82-amino-acid chain; its full sequence is MSMAQVVEACKLHAVFAKLGYLFRARVCLDIALANLKQLRQRVAIPQVANMLAKKEAQCCLLREKLNTQIDNRSLIKLYKIA.

This is an uncharacterized protein from Orgyia pseudotsugata (Douglas-fir tussock moth).